We begin with the raw amino-acid sequence, 146 residues long: Large ribosomal subunit protein uL15 (146 aa).

Residues 1–51 form a disordered region; it reads MQLNTLKPAEGSKKNRRRVGRGIGSGLGKTAGRGHKGQKSRSGGFHKVGFE. Gly residues predominate over residues 21 to 31; that stretch reads RGIGSGLGKTA.

Belongs to the universal ribosomal protein uL15 family. Part of the 50S ribosomal subunit.

Functionally, binds to the 23S rRNA. The sequence is that of Large ribosomal subunit protein uL15 from Polynucleobacter asymbioticus (strain DSM 18221 / CIP 109841 / QLW-P1DMWA-1) (Polynucleobacter necessarius subsp. asymbioticus).